Consider the following 420-residue polypeptide: uncharacterized protein (420 aa).

This sequence belongs to the asfivirus K421R family.

The protein localises to the virion. This is an uncharacterized protein from Ornithodoros (relapsing fever ticks).